The following is a 397-amino-acid chain: Enoyl-[acyl-carrier-protein] reductase [NADH] (397 aa).

Residues 47–52, 73–74, 110–111, and 138–139 contribute to the NAD(+) site; these read GASTGY, LE, DA, and LA. Tyr224 provides a ligand contact to substrate. Tyr234 functions as the Proton donor in the catalytic mechanism. Residues Lys243 and 272–274 each bind NAD(+); that span reads LVT.

The protein belongs to the TER reductase family. Monomer.

The catalysed reaction is a 2,3-saturated acyl-[ACP] + NAD(+) = a (2E)-enoyl-[ACP] + NADH + H(+). It participates in lipid metabolism; fatty acid biosynthesis. Its function is as follows. Involved in the final reduction of the elongation cycle of fatty acid synthesis (FAS II). Catalyzes the reduction of a carbon-carbon double bond in an enoyl moiety that is covalently linked to an acyl carrier protein (ACP). This chain is Enoyl-[acyl-carrier-protein] reductase [NADH], found in Methylobacillus flagellatus (strain ATCC 51484 / DSM 6875 / VKM B-1610 / KT).